A 318-amino-acid polypeptide reads, in one-letter code: MPNIKIFSGSSHQDLSQKIADRLGLELGKVVTKKFSNQETCVEIDESVRGEDVYIVQSGCGEINDSLMELLIMINACKIASASRVTAVIPCFPYARQDKKDKSRSPISAKLVANMLSIAGADHIITMDLHASQIQGFFDIPVDNLYAEPTVLKWIRENIPEWKNCIIVSPDAGGAKRVTSIADQLNVDFALIHKERKKANEVDCIVLVGDVNDRVAILVDDMADTCVTICLAADKLLSAGATRVYAILTHGIFSGPAISRINTACFEAVVVTNTIPQDEKMKHCSKIRVIDISMILAEAIRRTHNGESVSYLFSHVPL.

96 to 101 (RQDKKD) contacts ATP. Residues aspartate 128, histidine 130, aspartate 139, and aspartate 143 each contribute to the Mg(2+) site. Position 130 (histidine 130) interacts with ATP. The interval 212-227 (NDRVAILVDDMADTCV) is binding of phosphoribosylpyrophosphate.

Belongs to the ribose-phosphate pyrophosphokinase family. Homodimer. The active form is probably a hexamer composed of 3 homodimers. The cofactor is Mg(2+). Testis.

The catalysed reaction is D-ribose 5-phosphate + ATP = 5-phospho-alpha-D-ribose 1-diphosphate + AMP + H(+). Its pathway is metabolic intermediate biosynthesis; 5-phospho-alpha-D-ribose 1-diphosphate biosynthesis; 5-phospho-alpha-D-ribose 1-diphosphate from D-ribose 5-phosphate (route I): step 1/1. Activated by magnesium and inorganic phosphate. In terms of biological role, catalyzes the synthesis of phosphoribosylpyrophosphate (PRPP) that is essential for nucleotide synthesis. This is Ribose-phosphate pyrophosphokinase 3 (PRPS1L1) from Homo sapiens (Human).